Here is a 978-residue protein sequence, read N- to C-terminus: Receptor like protein 21 (978 aa).

The N-terminal stretch at 1 to 27 (MLLAMEGKLFLCQYLIWVMLLLGQLHG) is a signal peptide. Over 28–930 (CTSCIEKERE…EEDDKAAIDM (903 aa)) the chain is Extracellular. N-linked (GlcNAc...) asparagine glycans are attached at residues N64, N79, N102, N116, and N155. 28 LRR repeats span residues 141–167 (LRNL…AATS), 169–189 (TTLI…GLKD), 190–213 (LTNL…LIHL), 214–237 (KKLK…ELQN), 238–262 (LINL…VFCK), 264–287 (KNLR…LGSL), 288–310 (KKLR…SFSS), 312–335 (ESLE…PLTN), 337–361 (TNLK…TWQP), 362–385 (NFQL…LLYQ), 386–409 (KKLR…LLTN), 410–432 (NPEL…PTMV), 433–455 (HNLQ…MDHA), 457–480 (PNLV…IGEM), 481–504 (KNIS…FVTG), 506–529 (VSIM…ETNF), 530–553 (PSLD…LSNS), 554–577 (TMLR…LFEF), 579–601 (YLDY…LLGM), 602–625 (PFLS…VDSE), 627–646 (GIYM…DTLL), 647–671 (KSVQ…DTQS), 673–693 (NILL…LCDL), 694–716 (SNVR…CLSN), 788–811 (LRLM…ELGD), 812–835 (LLKL…SFSK), 837–859 (IDVE…LLSS), and 860–885 (LTSL…QFNT). N204 is a glycosylation site (N-linked (GlcNAc...) asparagine). N335 is a glycosylation site (N-linked (GlcNAc...) asparagine). Residues N397 and N420 are each glycosylated (N-linked (GlcNAc...) asparagine). Residues N463, N482, and N492 are each glycosylated (N-linked (GlcNAc...) asparagine). N552 is a glycosylation site (N-linked (GlcNAc...) asparagine). N636 is a glycosylation site (N-linked (GlcNAc...) asparagine). N-linked (GlcNAc...) asparagine glycans are attached at residues N681 and N716. Residue N819 is glycosylated (N-linked (GlcNAc...) asparagine). N872 carries N-linked (GlcNAc...) asparagine glycosylation. Residues 902–922 (TSRSCETNKSPEEADNGQEEE) are disordered. A helical transmembrane segment spans residues 931-951 (MVFYFSTASIYVTALIGVLVL). Over 952-978 (MCFDCPWRRAWLRIVDAFIASAKHVLP) the chain is Cytoplasmic.

The protein belongs to the RLP family.

It localises to the cell membrane. This chain is Receptor like protein 21, found in Arabidopsis thaliana (Mouse-ear cress).